Consider the following 325-residue polypeptide: Olfactory receptor 1S1 (325 aa).

Residues 1–38 (MKTFSSFLQIGRNMHQGNQTTITEFILLGFFKQDEHQN) lie on the Extracellular side of the membrane. An N-linked (GlcNAc...) asparagine glycan is attached at N18. A helical transmembrane segment spans residues 39-62 (LLFVLFLGMYLVTVIGNGLIIVAI). The Cytoplasmic portion of the chain corresponds to 63–70 (SLDTYLHT). The chain crosses the membrane as a helical span at residues 71–92 (PMYLFLANLSFADISSISNSVP). The Extracellular segment spans residues 93-113 (KMLVNIQTKSQSISYESCITQ). C110 and C202 form a disulfide bridge. The helical transmembrane segment at 114-133 (MYFSIVFVVIDNLLLGTMAY) threads the bilayer. Over 134 to 152 (DHFVAICHPLNYTILMRPR) the chain is Cytoplasmic. The helical transmembrane segment at 153–171 (FGILLTVISWFLSNIIALT) threads the bilayer. Over 172-208 (HTLLLIQLLFCNHNTLPHFFCDLAPLLKLSCSDTLIN) the chain is Extracellular. The chain crosses the membrane as a helical span at residues 209–232 (ELVLFIVGLSVIIFPFTLSFFSYV). The Cytoplasmic segment spans residues 233-249 (CIIRAVLRVSSTQGKWK). Residues 250 to 272 (AFSTCGSHLTVVLLFYGTIVGVY) form a helical membrane-spanning segment. Over 273 to 285 (FFPSSTHPEDTDK) the chain is Extracellular. The chain crosses the membrane as a helical span at residues 286–305 (IGAVLFTVVTPMINPFIYSL). The Cytoplasmic portion of the chain corresponds to 306–325 (RNKDMKGALRKLINRKISSL).

It belongs to the G-protein coupled receptor 1 family.

Its subcellular location is the cell membrane. In terms of biological role, odorant receptor. The chain is Olfactory receptor 1S1 (OR1S1) from Homo sapiens (Human).